We begin with the raw amino-acid sequence, 337 residues long: Holliday junction branch migration complex subunit RuvB (337 aa).

The segment at 1–180 (MTRLISADKS…FGVISRLEFY (180 aa)) is large ATPase domain (RuvB-L). ATP contacts are provided by residues Leu-19, Arg-20, Gly-61, Lys-64, Thr-65, Thr-66, 127 to 129 (EDF), Arg-170, Tyr-180, and Arg-217. Thr-65 is a Mg(2+) binding site. The interval 181-251 (THEELAFIIT…VADQALALLE (71 aa)) is small ATPAse domain (RuvB-S). Residues 254–337 (DMGFDMMDRA…APEPPQGKLF (84 aa)) form a head domain (RuvB-H) region. 2 residues coordinate DNA: Arg-309 and Arg-314.

The protein belongs to the RuvB family. As to quaternary structure, homohexamer. Forms an RuvA(8)-RuvB(12)-Holliday junction (HJ) complex. HJ DNA is sandwiched between 2 RuvA tetramers; dsDNA enters through RuvA and exits via RuvB. An RuvB hexamer assembles on each DNA strand where it exits the tetramer. Each RuvB hexamer is contacted by two RuvA subunits (via domain III) on 2 adjacent RuvB subunits; this complex drives branch migration. In the full resolvosome a probable DNA-RuvA(4)-RuvB(12)-RuvC(2) complex forms which resolves the HJ.

The protein localises to the cytoplasm. It carries out the reaction ATP + H2O = ADP + phosphate + H(+). The RuvA-RuvB-RuvC complex processes Holliday junction (HJ) DNA during genetic recombination and DNA repair, while the RuvA-RuvB complex plays an important role in the rescue of blocked DNA replication forks via replication fork reversal (RFR). RuvA specifically binds to HJ cruciform DNA, conferring on it an open structure. The RuvB hexamer acts as an ATP-dependent pump, pulling dsDNA into and through the RuvAB complex. RuvB forms 2 homohexamers on either side of HJ DNA bound by 1 or 2 RuvA tetramers; 4 subunits per hexamer contact DNA at a time. Coordinated motions by a converter formed by DNA-disengaged RuvB subunits stimulates ATP hydrolysis and nucleotide exchange. Immobilization of the converter enables RuvB to convert the ATP-contained energy into a lever motion, pulling 2 nucleotides of DNA out of the RuvA tetramer per ATP hydrolyzed, thus driving DNA branch migration. The RuvB motors rotate together with the DNA substrate, which together with the progressing nucleotide cycle form the mechanistic basis for DNA recombination by continuous HJ branch migration. Branch migration allows RuvC to scan DNA until it finds its consensus sequence, where it cleaves and resolves cruciform DNA. This is Holliday junction branch migration complex subunit RuvB from Citrifermentans bemidjiense (strain ATCC BAA-1014 / DSM 16622 / JCM 12645 / Bem) (Geobacter bemidjiensis).